We begin with the raw amino-acid sequence, 320 residues long: Probable cell division protein WhiA (320 aa).

The H-T-H motif DNA-binding region spans Ser-282–Gln-315.

Belongs to the WhiA family.

In terms of biological role, involved in cell division and chromosome segregation. In Bifidobacterium animalis subsp. lactis (strain AD011), this protein is Probable cell division protein WhiA.